The chain runs to 308 residues: Transaldolase (308 aa).

Lysine 125 functions as the Schiff-base intermediate with substrate in the catalytic mechanism.

It belongs to the transaldolase family. Type 1 subfamily. As to quaternary structure, homodimer.

Its subcellular location is the cytoplasm. It catalyses the reaction D-sedoheptulose 7-phosphate + D-glyceraldehyde 3-phosphate = D-erythrose 4-phosphate + beta-D-fructose 6-phosphate. It functions in the pathway carbohydrate degradation; pentose phosphate pathway; D-glyceraldehyde 3-phosphate and beta-D-fructose 6-phosphate from D-ribose 5-phosphate and D-xylulose 5-phosphate (non-oxidative stage): step 2/3. Functionally, transaldolase is important for the balance of metabolites in the pentose-phosphate pathway. The polypeptide is Transaldolase (Pseudomonas fluorescens (strain ATCC BAA-477 / NRRL B-23932 / Pf-5)).